The sequence spans 134 residues: Glycine cleavage system H protein (134 aa).

Residues 24–106 (TVRVGITDYA…YGAGWLLDIQ (83 aa)) form the Lipoyl-binding domain. Position 65 is an N6-lipoyllysine (Lys65).

It belongs to the GcvH family. The glycine cleavage system is composed of four proteins: P, T, L and H. The cofactor is (R)-lipoate.

In terms of biological role, the glycine cleavage system catalyzes the degradation of glycine. The H protein shuttles the methylamine group of glycine from the P protein to the T protein. The polypeptide is Glycine cleavage system H protein (Mycobacterium bovis (strain ATCC BAA-935 / AF2122/97)).